The chain runs to 449 residues: Heterogeneous nuclear ribonucleoprotein H2 (449 aa).

M1 bears the N-acetylmethionine mark. At M2 the chain carries N-acetylmethionine; in Heterogeneous nuclear ribonucleoprotein H2, N-terminally processed. Positions 11–90 (FVVKVRGLPW…RYVEVFKSNS (80 aa)) constitute an RRM 1 domain. S23 carries the post-translational modification Phosphoserine. A Glycyl lysine isopeptide (Lys-Gly) (interchain with G-Cter in SUMO2) cross-link involves residue K35. Residues S54 and S63 each carry the phosphoserine modification. Residue K87 forms a Glycyl lysine isopeptide (Lys-Gly) (interchain with G-Cter in SUMO2) linkage. S90 bears the Phosphoserine mark. K98 participates in a covalent cross-link: Glycyl lysine isopeptide (Lys-Gly) (interchain with G-Cter in SUMO2). In terms of domain architecture, RRM 2 spans 111 to 188 (GFVRLRGLPF…RYIEIFKSSR (78 aa)). R233 carries the dimethylated arginine; alternate modification. Omega-N-methylarginine; alternate is present on R233. One copy of the 1-1 repeat lies at 234–249 (GAYGGGYGGYDDYGGY). The tract at residues 234–433 (GAYGGGYGGY…YGGQSSMSGY (200 aa)) is 2 X 16 AA Gly-rich approximate repeats. Y246 carries the post-translational modification Phosphotyrosine. An RRM 3 domain is found at 289–364 (HCVHMRGLPY…RYVELFLNST (76 aa)). S310 bears the Phosphoserine mark. 3 consecutive repeat copies span residues 354-372 (HRYV…GGAY), 374-392 (HSYV…GGAY), and 418-433 (AGYG…MSGY). The segment at 354–392 (HRYVELFLNSTAGTSGGAYDHSYVELFLNSTAGASGGAY) is 2 X 19 AA perfect repeats.

In terms of assembly, component of a ribonucleoprotein complex containing mRNAs and RNA-binding proteins including DDX5, HNRNPH2 and SRSF1 as well as splicing regulator ARVCF. Interacts with TXNL4/DIM1.

It is found in the nucleus. The protein resides in the nucleoplasm. Functionally, this protein is a component of the heterogeneous nuclear ribonucleoprotein (hnRNP) complexes which provide the substrate for the processing events that pre-mRNAs undergo before becoming functional, translatable mRNAs in the cytoplasm. Binds poly(RG). The polypeptide is Heterogeneous nuclear ribonucleoprotein H2 (Hnrnph2) (Rattus norvegicus (Rat)).